Here is a 96-residue protein sequence, read N- to C-terminus: Co-chaperonin GroES (96 aa).

The protein belongs to the GroES chaperonin family. As to quaternary structure, heptamer of 7 subunits arranged in a ring. Interacts with the chaperonin GroEL.

It is found in the cytoplasm. In terms of biological role, together with the chaperonin GroEL, plays an essential role in assisting protein folding. The GroEL-GroES system forms a nano-cage that allows encapsulation of the non-native substrate proteins and provides a physical environment optimized to promote and accelerate protein folding. GroES binds to the apical surface of the GroEL ring, thereby capping the opening of the GroEL channel. This chain is Co-chaperonin GroES, found in Methylibium petroleiphilum (strain ATCC BAA-1232 / LMG 22953 / PM1).